Here is a 217-residue protein sequence, read N- to C-terminus: GTP-binding protein Rit2 (217 aa).

Residues 27–34, 74–78, and 133–136 contribute to the GTP site; these read GAGGVGKS, DTAGQ, and NKID.

It belongs to the small GTPase superfamily. Ras family. Interacts with PLXNB3. Interacts with AFDN, the C-terminal domain of RALGDS and RLF, but not with RIN1 and PIK3CA. RLF binds exclusively to the active GTP-bound form. Binds calmodulin. Interacts with POU4F1 (via N-terminus); the interaction controls POU4F1 transactivation activity on some neuronal target genes. As to expression, expressed in ganglion cell layer (GCL), inner plexiform layer (IPL) and inner nuclear layer (INL) of the retina. Expressed in retinal ganglion cells (RGCs). Expressed in horizontal, bipolar and amacrine cells, but not Mueller glia, of the INL (at protein level). Neuron-specific. Expressed in ganglion cell layer (GCL) and inner plexiform layer (IPL).

The protein resides in the nucleus. Its subcellular location is the cell membrane. The catalysed reaction is GTP + H2O = GDP + phosphate + H(+). Alternates between an inactive form bound to GDP and an active form bound to GTP. In terms of biological role, binds and exchanges GTP and GDP. Binds and modulates the activation of POU4F1 as gene expression regulator. The sequence is that of GTP-binding protein Rit2 (Rit2) from Mus musculus (Mouse).